Consider the following 482-residue polypeptide: Cis-aconitate decarboxylase-like protein oryM (482 aa).

The protein belongs to the PrpD family.

The protein operates within secondary metabolite biosynthesis. In terms of biological role, cis-aconitate decarboxylase-like protein; part of the gene cluster that mediates the biosynthesis of oryzines, natural products with an unusual maleidride backbone. The two subunits of the fungal fatty acid synthase oryfasA and oryfasB probably form octenoic acid. This fatty acid is most likely activated by the acyl-CoA ligase oryP to give octenyl-CoA before the citrate synthase-like protein oryE catalyzes condensation with oxaloacetate to form tricarboxylic acid. The next steps of the pathways are conjectural, but a favorite possible route has been proposed, beginning with decarboxylation and concomitant dehydration by the decarboxylase oryM, followed by tautomerization, which may lead to the production of a diene intermediate. Reduction of this diene intermediate could give the known metabolite piliformic acid. On the pathway to oryzine B and oryzine A, however, hydroxylation of the diene by the alpha-ketoglutarate-dependent dioxygenase oryG and lactonisation by the lactonohydrolases oryH or oryL could give oryzine B directly. Finally, enoyl reduction by the dehydrogenase oryD would then convert oryzine B into oryzine A. The polypeptide is Cis-aconitate decarboxylase-like protein oryM (Aspergillus oryzae (strain ATCC 42149 / RIB 40) (Yellow koji mold)).